Consider the following 623-residue polypeptide: Chaperone protein DnaK (623 aa).

Position 197 is a phosphothreonine; by autocatalysis (threonine 197). Over residues 595 to 615 (AENMYKKDEPNTANDKKKKDD) the composition is skewed to basic and acidic residues. The disordered stretch occupies residues 595–623 (AENMYKKDEPNTANDKKKKDDDVIDAEVE).

It belongs to the heat shock protein 70 family.

Functionally, acts as a chaperone. The protein is Chaperone protein DnaK of Campylobacter jejuni subsp. jejuni serotype O:6 (strain 81116 / NCTC 11828).